A 150-amino-acid chain; its full sequence is Cell division protein SepF (150 aa).

It belongs to the SepF family. Homodimer. Interacts with FtsZ.

The protein localises to the cytoplasm. Functionally, cell division protein that is part of the divisome complex and is recruited early to the Z-ring. Probably stimulates Z-ring formation, perhaps through the cross-linking of FtsZ protofilaments. Its function overlaps with FtsA. In Clostridium botulinum (strain ATCC 19397 / Type A), this protein is Cell division protein SepF.